The following is a 228-amino-acid chain: Phosphatidate cytidylyltransferase (228 aa).

The next 6 membrane-spanning stretches (helical) occupy residues 31–51, 65–85, 93–113, 131–151, 165–185, and 206–226; these read FVIA…LVGL, INYL…LIFL, LVIM…MIGG, WTGL…VSLI, IYLF…DLFI, and GVLD…CINI.

It belongs to the CDS family.

It is found in the cell membrane. The catalysed reaction is a 1,2-diacyl-sn-glycero-3-phosphate + CTP + H(+) = a CDP-1,2-diacyl-sn-glycerol + diphosphate. It functions in the pathway phospholipid metabolism; CDP-diacylglycerol biosynthesis; CDP-diacylglycerol from sn-glycerol 3-phosphate: step 3/3. This Rickettsia prowazekii (strain Madrid E) protein is Phosphatidate cytidylyltransferase (cdsA).